The sequence spans 266 residues: UPF0246 protein PHZ_c0561 (266 aa).

Residues 245 to 266 (DEEFTFARPQPPPPAASRNKED) are disordered.

Belongs to the UPF0246 family.

The chain is UPF0246 protein PHZ_c0561 from Phenylobacterium zucineum (strain HLK1).